The sequence spans 450 residues: NADH-quinone oxidoreductase subunit H (450 aa).

9 helical membrane-spanning segments follow: residues 18–38 (WWLV…TPLL), 91–111 (ILAP…IPFG), 128–148 (LPVA…GIVL), 169–189 (VISY…DAGT), 201–221 (HTWY…SMVG), 262–282 (VTVS…PFPL), 292–312 (WWPV…FVWL), 324–344 (FMGL…MIVA), and 358–378 (SIAL…LLWK). Residues 387-450 (APEKPVEPRG…TGPTQENSDD (64 aa)) form a disordered region. Residues 390–400 (KPVEPRGRAEL) are compositionally biased toward basic and acidic residues. The segment covering 433–450 (VSVTGAHSTGPTQENSDD) has biased composition (polar residues).

The protein belongs to the complex I subunit 1 family. As to quaternary structure, NDH-1 is composed of 14 different subunits. Subunits NuoA, H, J, K, L, M, N constitute the membrane sector of the complex.

It is found in the cell membrane. It carries out the reaction a quinone + NADH + 5 H(+)(in) = a quinol + NAD(+) + 4 H(+)(out). Its function is as follows. NDH-1 shuttles electrons from NADH, via FMN and iron-sulfur (Fe-S) centers, to quinones in the respiratory chain. The immediate electron acceptor for the enzyme in this species is believed to be ubiquinone. Couples the redox reaction to proton translocation (for every two electrons transferred, four hydrogen ions are translocated across the cytoplasmic membrane), and thus conserves the redox energy in a proton gradient. This subunit may bind ubiquinone. This chain is NADH-quinone oxidoreductase subunit H, found in Rhodococcus jostii (strain RHA1).